A 446-amino-acid chain; its full sequence is Tubulin beta chain (446 aa).

GTP is bound by residues Gln-11, Glu-69, Ser-138, Gly-142, Thr-143, Gly-144, Asn-204, and Asn-226. Glu-69 is a binding site for Mg(2+). The disordered stretch occupies residues 421 to 446; the sequence is EYQQYQDAGIDEEEEEYEEELPEGEE. Acidic residues predominate over residues 429–446; it reads GIDEEEEEYEEELPEGEE.

This sequence belongs to the tubulin family. Dimer of alpha and beta chains. A typical microtubule is a hollow water-filled tube with an outer diameter of 25 nm and an inner diameter of 15 nM. Alpha-beta heterodimers associate head-to-tail to form protofilaments running lengthwise along the microtubule wall with the beta-tubulin subunit facing the microtubule plus end conferring a structural polarity. Microtubules usually have 13 protofilaments but different protofilament numbers can be found in some organisms and specialized cells. Mg(2+) serves as cofactor.

Its subcellular location is the cytoplasm. It is found in the cytoskeleton. Functionally, tubulin is the major constituent of microtubules, a cylinder consisting of laterally associated linear protofilaments composed of alpha- and beta-tubulin heterodimers. Microtubules grow by the addition of GTP-tubulin dimers to the microtubule end, where a stabilizing cap forms. Below the cap, tubulin dimers are in GDP-bound state, owing to GTPase activity of alpha-tubulin. The chain is Tubulin beta chain (TUB2) from Fusarium fujikuroi (Bakanae and foot rot disease fungus).